Reading from the N-terminus, the 384-residue chain is 8-amino-7-oxononanoate synthase (384 aa).

Arginine 21 contributes to the substrate binding site. 108–109 (GF) provides a ligand contact to pyridoxal 5'-phosphate. Histidine 133 contacts substrate. Positions 179, 207, and 233 each coordinate pyridoxal 5'-phosphate. Lysine 236 carries the N6-(pyridoxal phosphate)lysine modification. Residue threonine 352 coordinates substrate.

This sequence belongs to the class-II pyridoxal-phosphate-dependent aminotransferase family. BioF subfamily. In terms of assembly, homodimer. Requires pyridoxal 5'-phosphate as cofactor.

The catalysed reaction is 6-carboxyhexanoyl-[ACP] + L-alanine + H(+) = (8S)-8-amino-7-oxononanoate + holo-[ACP] + CO2. It functions in the pathway cofactor biosynthesis; biotin biosynthesis. Catalyzes the decarboxylative condensation of pimeloyl-[acyl-carrier protein] and L-alanine to produce 8-amino-7-oxononanoate (AON), [acyl-carrier protein], and carbon dioxide. The protein is 8-amino-7-oxononanoate synthase of Escherichia coli O6:H1 (strain CFT073 / ATCC 700928 / UPEC).